Reading from the N-terminus, the 365-residue chain is MTITGIIAEFNPFHNGHKYLLDQAEGLKIVAMSGNFMQRGEPAIVDKWTRAQMALENGADLVVELPFLVSVQAADFFGQGAVDILDRLGIDSLVFGTEEVRDYQKIADLYTEKGTEMEKFVENLPDSLSYPQKTQAMWKEFAGLDFSGNTPNHVLALAYAKAVAGRNIKLHPIQRQGAGYHSVNKDVDFASATALRQHQKDQDFLERFMPSVALFEQASKVIWEDYFPLLRYQILSNPDLTTIYQVNQEMAVRIKEAIKTAQSVEELVELVTTKRYTKARVRRLLSYILAQARENVLPEAIHVLGFTEKGRQHLKSLKGQVSLVSRIGKEPWDAMTQKADQIYQLGNLSIAQQNFGRVPIRIETN.

ATP-binding positions include 7-20 (IAEFNPFHNGHKYL), glycine 96, asparagine 152, and arginine 175.

The protein belongs to the TmcAL family.

Its subcellular location is the cytoplasm. The enzyme catalyses cytidine(34) in elongator tRNA(Met) + acetate + ATP = N(4)-acetylcytidine(34) in elongator tRNA(Met) + AMP + diphosphate. Catalyzes the formation of N(4)-acetylcytidine (ac(4)C) at the wobble position of elongator tRNA(Met), using acetate and ATP as substrates. First activates an acetate ion to form acetyladenylate (Ac-AMP) and then transfers the acetyl group to tRNA to form ac(4)C34. The protein is tRNA(Met) cytidine acetate ligase of Streptococcus pneumoniae (strain ATCC 700669 / Spain 23F-1).